A 356-amino-acid chain; its full sequence is Protein RecA (356 aa).

ATP is bound at residue 71–78 (GPESSGKT).

The protein belongs to the RecA family.

It localises to the cytoplasm. Its function is as follows. Can catalyze the hydrolysis of ATP in the presence of single-stranded DNA, the ATP-dependent uptake of single-stranded DNA by duplex DNA, and the ATP-dependent hybridization of homologous single-stranded DNAs. It interacts with LexA causing its activation and leading to its autocatalytic cleavage. This Synechococcus elongatus (strain ATCC 33912 / PCC 7942 / FACHB-805) (Anacystis nidulans R2) protein is Protein RecA.